The following is a 302-amino-acid chain: Methionyl-tRNA formyltransferase (302 aa).

A (6S)-5,6,7,8-tetrahydrofolate-binding site is contributed by 108-111 (SLLP).

This sequence belongs to the Fmt family.

It catalyses the reaction L-methionyl-tRNA(fMet) + (6R)-10-formyltetrahydrofolate = N-formyl-L-methionyl-tRNA(fMet) + (6S)-5,6,7,8-tetrahydrofolate + H(+). Attaches a formyl group to the free amino group of methionyl-tRNA(fMet). The formyl group appears to play a dual role in the initiator identity of N-formylmethionyl-tRNA by promoting its recognition by IF2 and preventing the misappropriation of this tRNA by the elongation apparatus. In Nitratiruptor sp. (strain SB155-2), this protein is Methionyl-tRNA formyltransferase.